Reading from the N-terminus, the 38-residue chain is Toxin Bcg III 31.16 (38 aa).

3 disulfides stabilise this stretch: cysteine 4/cysteine 37, cysteine 6/cysteine 30, and cysteine 20/cysteine 38.

Belongs to the sea anemone type 3 (BDS) potassium channel toxin family.

It is found in the secreted. The protein localises to the nematocyst. Its function is as follows. Possible modulator of crustacean voltage-gated sodium channels (Nav). The sequence is that of Toxin Bcg III 31.16 from Bunodosoma cangicum (Sea anemone).